A 102-amino-acid chain; its full sequence is Biotrophy-associated secreted protein 2 (102 aa).

A signal peptide spans 1 to 19; sequence MVRVSTFAAILAMALSVTA. Asn-46 carries N-linked (GlcNAc...) asparagine glycosylation.

The protein localises to the secreted. Functionally, secreted effector involved in biotrophic colonization of plant cells. This Pyricularia oryzae (strain 70-15 / ATCC MYA-4617 / FGSC 8958) (Rice blast fungus) protein is Biotrophy-associated secreted protein 2.